We begin with the raw amino-acid sequence, 352 residues long: RNA-binding protein lark (352 aa).

RRM domains lie at 7-77 (FKLF…AAKS) and 86-156 (TKIF…VSTS). A CCHC-type zinc finger spans residues 168–185 (EQCYRCGRSGHWSKECPR). Disordered regions lie at residues 187–228 (YGSA…LRDR) and 254–352 (YQTS…YAPY). A phosphoserine mark is found at S198 and S201. Pro residues-rich tracts occupy residues 214-224 (PYPPPPPPPPF) and 262-277 (FPPP…PLPP). The span at 279–288 (LSGSLRSCSV) shows a compositional bias: polar residues. 2 positions are modified to phosphoserine: S315 and S325. The span at 320–334 (GYEDFSRDAFDERMI) shows a compositional bias: basic and acidic residues.

Expressed in the CNS and in CCAP neurons of the ventral nervous system (VNS), which control insect ecdysis.

It is found in the cytoplasm. The protein resides in the nucleus. In terms of biological role, essential RNA-binding protein. May be required for circadian repression of eclosion. Also essential for nurse cell dumping during oogenesis, the process whereby the cytoplasmic contents of nurse cells are transferred to the oocyte late in it's development. The protein is RNA-binding protein lark (lark) of Drosophila melanogaster (Fruit fly).